Here is a 428-residue protein sequence, read N- to C-terminus: Histone deacetylase 3 (428 aa).

The segment at 3 to 316 (NRTAYFYDPD…WTFETSLLVE (314 aa)) is histone deacetylase. The 1D-myo-inositol 1,4,5,6-tetrakisphosphate site is built by H17, G21, and K25. The active site involves H135. Residues D170, H172, and D259 each contribute to the Zn(2+) site. Residue R265 participates in 1D-myo-inositol 1,4,5,6-tetrakisphosphate binding. The disordered stretch occupies residues 381–428 (PSDLLSYERPDEADPEERGSEENFSRPEAANEFYDGDHDHDKESDVEI). Basic and acidic residues-rich tracts occupy residues 386–405 (SYER…ENFS) and 415–428 (DGDH…DVEI).

The protein belongs to the histone deacetylase family. HD type 1 subfamily.

The protein localises to the nucleus. It localises to the chromosome. The protein resides in the cytoplasm. Its subcellular location is the cytosol. It carries out the reaction N(6)-acetyl-L-lysyl-[histone] + H2O = L-lysyl-[histone] + acetate. The enzyme catalyses N(6)-acetyl-L-lysyl-[protein] + H2O = L-lysyl-[protein] + acetate. The catalysed reaction is N(6)-(2E)-butenoyl-L-lysyl-[protein] + H2O = (2E)-2-butenoate + L-lysyl-[protein]. It catalyses the reaction N(6)-(2-hydroxyisobutanoyl)-L-lysyl-[protein] + H2O = 2-hydroxy-2-methylpropanoate + L-lysyl-[protein]. It carries out the reaction N(6)-[(S)-lactoyl]-L-lysyl-[protein] + H2O = (S)-lactate + L-lysyl-[protein]. Its activity is regulated as follows. Inositol tetraphosphate (1D-myo-inositol 1,4,5,6-tetrakisphosphate) promotes the histone deacetylase activity by acting as an intermolecular glue between hdac3 and N-Cor repressor complex components. Histone deacetylase that catalyzes the deacetylation of lysine residues on the N-terminal part of the core histones (H2A, H2B, H3 and H4), and some other non-histone substrates. Histone deacetylation gives a tag for epigenetic repression and plays an important role in transcriptional regulation, cell cycle progression and developmental events. Histone deacetylases act via the formation of large multiprotein complexes, such as N-Cor repressor complex, which activate the histone deacetylase activity. Participates in the BCL6 transcriptional repressor activity by deacetylating the H3 'Lys-27' (H3K27) on enhancer elements, antagonizing EP300 acetyltransferase activity and repressing proximal gene expression. Also functions as a deacetylase for non-histone targets. In addition to protein deacetylase activity, also acts as a protein-lysine deacylase by recognizing other acyl groups: catalyzes removal of (2E)-butenoyl (crotonyl), lactoyl (lactyl) and 2-hydroxyisobutanoyl (2-hydroxyisobutyryl) acyl groups from lysine residues, leading to protein decrotonylation, delactylation and de-2-hydroxyisobutyrylation, respectively. This Danio rerio (Zebrafish) protein is Histone deacetylase 3 (hdac3).